The sequence spans 398 residues: Mu-type opioid receptor (398 aa).

Residues 1–66 (MDSSAGPGNI…CPQTGSPSMV (66 aa)) are Extracellular-facing. N-linked (GlcNAc...) asparagine glycosylation is found at Asn-9, Asn-31, Asn-38, and Asn-46. The helical transmembrane segment at 67–91 (TAITIMALYSIVCVVGLFGNFLVMY) threads the bilayer. Residues 92 to 104 (VIVRYTKMKTATN) are Cytoplasmic-facing. The chain crosses the membrane as a helical span at residues 105 to 129 (IYIFNLALADALATSTLPFQSVNYL). Residues 130-140 (MGTWPFGNILC) are Extracellular-facing. Cys-140 and Cys-217 are disulfide-bonded. A helical transmembrane segment spans residues 141–163 (KIVISIDYYNMFTSIFTLCTMSV). Topologically, residues 164–183 (DRYIAVCHPVKALDFRTPRN) are cytoplasmic. Phosphotyrosine is present on Tyr-166. Residues 184 to 205 (AKIVNVCNWILSSAIGLPVMFM) traverse the membrane as a helical segment. Residues 206-228 (ATTKYRQGSIDCTLTFSHPTWYW) lie on the Extracellular side of the membrane. Residues 229–253 (ENLLKICVFIFAFIMPVLIITVCYG) traverse the membrane as a helical segment. The Cytoplasmic segment spans residues 254–277 (LMILRLKSVRMLSGSKEKDRNLRR). A helical transmembrane segment spans residues 278-304 (ITRMVLVVVAVFIVCWTPIHIYVIIKA). Over 305–312 (LITIPETT) the chain is Extracellular. The chain crosses the membrane as a helical span at residues 313 to 336 (FQTVSWHFCIALGYTNSCLNPVLY). The NPxxY; plays a role in stabilizing the activated conformation of the receptor motif lies at 332–336 (NPVLY). Topologically, residues 337–398 (AFLDENFKRC…NLEAETAPLP (62 aa)) are cytoplasmic. The S-palmitoyl cysteine moiety is linked to residue Cys-351. The interval 362–383 (NSARIRQNTREHPSTANTVDRT) is disordered. Ser-363 bears the Phosphoserine mark. Residue Thr-370 is modified to Phosphothreonine. At Ser-375 the chain carries Phosphoserine. A Phosphothreonine modification is found at Thr-394.

It belongs to the G-protein coupled receptor 1 family. Forms homooligomers and heterooligomers with other GPCRs, such as OPRD1, OPRK1, OPRL1, NPFFR2, ADRA2A, SSTR2, CNR1 and CCR5 (probably in dimeric forms). Interacts with heterotrimeric G proteins; interaction with a heterotrimeric complex containing GNAI1, GNB1 and GNG2 stabilizes the active conformation of the receptor and increases its affinity for endomorphin-2, the synthetic opioid peptide DAMGO and for morphinan agonists. Interacts with PPL; the interaction disrupts agonist-mediated G-protein activation. Interacts (via C-terminus) with DNAJB4 (via C-terminus). Interacts with calmodulin; the interaction inhibits the constitutive activity of OPRM1; it abolishes basal and attenuates agonist-stimulated G-protein coupling. Interacts with FLNA, PLD2, RANBP9 and WLS and GPM6A. Interacts with RTP4. Interacts with SYP and GNAS. Interacts with RGS9, RGS17, RGS20, RGS4, PPP1R9B and HINT1. Isoform 9 interacts with GRPR. Phosphorylated. Differentially phosphorylated in basal and agonist-induced conditions. Agonist-mediated phosphorylation modulates receptor internalization. Phosphorylated by GRK2 in a agonist-dependent manner. Phosphorylation at Tyr-166 requires receptor activation, is dependent on non-receptor protein tyrosine kinase Src and results in a decrease in agonist efficacy by reducing G-protein coupling efficiency. Phosphorylated on tyrosine residues; the phosphorylation is involved in agonist-induced G-protein-independent receptor down-regulation. Phosphorylation at Ser-375 is involved in G-protein-dependent but not beta-arrestin-dependent activation of the ERK pathway. Post-translationally, ubiquitinated. A basal ubiquitination seems not to be related to degradation. Ubiquitination is increased upon formation of OPRM1:OPRD1 oligomers leading to proteasomal degradation; the ubiquitination is diminished by RTP4.

The protein localises to the cell membrane. The protein resides in the cell projection. It is found in the axon. Its subcellular location is the perikaryon. It localises to the dendrite. The protein localises to the endosome. Its function is as follows. Receptor for endogenous opioids such as beta-endorphin and endomorphin. Receptor for natural and synthetic opioids including morphine, heroin, DAMGO, fentanyl, etorphine, buprenorphin and methadone. Also activated by enkephalin peptides, such as Met-enkephalin or Met-enkephalin-Arg-Phe, with higher affinity for Met-enkephalin-Arg-Phe. Agonist binding to the receptor induces coupling to an inactive GDP-bound heterotrimeric G-protein complex and subsequent exchange of GDP for GTP in the G-protein alpha subunit leading to dissociation of the G-protein complex with the free GTP-bound G-protein alpha and the G-protein beta-gamma dimer activating downstream cellular effectors. The agonist- and cell type-specific activity is predominantly coupled to pertussis toxin-sensitive G(i) and G(o) G alpha proteins, GNAI1, GNAI2, GNAI3 and GNAO1 isoforms Alpha-1 and Alpha-2, and to a lesser extent to pertussis toxin-insensitive G alpha proteins GNAZ and GNA15. They mediate an array of downstream cellular responses, including inhibition of adenylate cyclase activity and both N-type and L-type calcium channels, activation of inward rectifying potassium channels, mitogen-activated protein kinase (MAPK), phospholipase C (PLC), phosphoinositide/protein kinase (PKC), phosphoinositide 3-kinase (PI3K) and regulation of NF-kappa-B. Also couples to adenylate cyclase stimulatory G alpha proteins. The selective temporal coupling to G-proteins and subsequent signaling can be regulated by RGSZ proteins, such as RGS9, RGS17 and RGS4. Phosphorylation by members of the GPRK subfamily of Ser/Thr protein kinases and association with beta-arrestins is involved in short-term receptor desensitization. Beta-arrestins associate with the GPRK-phosphorylated receptor and uncouple it from the G-protein thus terminating signal transduction. The phosphorylated receptor is internalized through endocytosis via clathrin-coated pits which involves beta-arrestins. The activation of the ERK pathway occurs either in a G-protein-dependent or a beta-arrestin-dependent manner and is regulated by agonist-specific receptor phosphorylation. Acts as a class A G-protein coupled receptor (GPCR) which dissociates from beta-arrestin at or near the plasma membrane and undergoes rapid recycling. Receptor down-regulation pathways are varying with the agonist and occur dependent or independent of G-protein coupling. Endogenous ligands induce rapid desensitization, endocytosis and recycling. Heterooligomerization with other GPCRs can modulate agonist binding, signaling and trafficking properties. Isoform 9 is involved in morphine-induced scratching and seems to cross-activate GRPR in response to morphine. This chain is Mu-type opioid receptor (Oprm1), found in Mus musculus (Mouse).